The primary structure comprises 420 residues: MTQRRVAITGIEVLAPGGLGRKEFWQLLSEGRTATRGITFFDPAPFRSKVAAEADFCGLENGLSPQEVRRMDRAAQFAVVTARAVEDSGAELAAHPPHRIGVVVGSAVGATMGLDNEYRVVSDGGRLDLVDHRYAVPHLYNYLVPSSFAAEVAWAVGAEGPSTVVSTGCTSGIDAVGIAVELVREGSVDVMVAGAVDAPISPIPCVLDAIKATTPRHDAPATASRPFDSTRNGFVLGEGAAFFVLEELHSARRRGAHIYAEIAGYATRSNAYHMTGLRDGAEMAEAIRLALDEARLNPEQVDYINAHGSGTKQNDRHETAAFKKALGEHAYRTPVSSIKSMVGHSLGAIGSIEIAASALAMEYDVVPPTANLHTPDPECDLDYVPLTARDQRVDSVLTVGSGFGGFQSAMVLTSAQRSTV.

One can recognise a Ketosynthase family 3 (KS3) domain in the interval 3–414 (QRRVAITGIE…GFQSAMVLTS (412 aa)). Catalysis depends on for beta-ketoacyl synthase activity residues Cys169, His307, and His344.

This sequence belongs to the thiolase-like superfamily. Beta-ketoacyl-ACP synthases family.

It participates in antifungal biosynthesis; monensin biosynthesis. In Streptomyces virginiae (Streptomyces cinnamonensis), this protein is Putative polyketide beta-ketoacyl synthase 1.